The chain runs to 540 residues: ADP,ATP carrier protein 2 (540 aa).

12 helical membrane passes run 23–43 (FSKFIPLFFLAFFVGVNYALL), 61–81 (VIPFLKVWGIVPGAVIVTMIY), 93–113 (VFISLVGGFLGFFALFATVIY), 150–170 (LYYVMSELWSSIVLSTLFWGV), 185–205 (ALINTGLNLSSVFAGEVSLWL), 222–242 (EVLLNITLLIVLAGGVILYLY), 292–312 (LLGIAVVVLSYNLVIHLFEVV), 334–354 (ITTLTGIVSALTGIFAAGQTI), 361–381 (IGALVPPLTMLITGALFFGAI), 389–409 (MIFGGILGISPLVLTAWLGGV), 455–475 (SGGSLVYQGLLIIFSSVAASL), and 477–497 (AITIVLLLALGSWIFVIAWLG).

The protein belongs to the ADP/ATP translocase tlc family.

It is found in the cell membrane. The chain is ADP,ATP carrier protein 2 (tlcB) from Chlamydia trachomatis serovar D (strain ATCC VR-885 / DSM 19411 / UW-3/Cx).